A 332-amino-acid chain; its full sequence is T-cell surface glycoprotein CD1c3 (332 aa).

The N-terminal stretch at 1–17 is a signal peptide; it reads MLFLQFLFLDVVLGGSI. Over 18 to 300 the chain is Extracellular; sequence TKNVVQENIS…IILYWGHGLS (283 aa). N-linked (GlcNAc...) asparagine glycosylation is found at Asn-25, Asn-38, Asn-75, and Asn-146. 2 disulfides stabilise this stretch: Cys-120–Cys-184 and Cys-224–Cys-279. The Ig-like domain maps to 205-292; the sequence is PEVWLSSSPN…HSSLRDQDII (88 aa). The chain crosses the membrane as a helical span at residues 301-321; sequence VILITFAVIVPLVLLIILVLL. Residues 322–332 lie on the Cytoplasmic side of the membrane; the sequence is CKKCCTYQGIP.

In terms of assembly, heterodimer with B2M (beta-2-microglobulin).

The protein localises to the cell membrane. The protein resides in the endosome membrane. Antigen-presenting protein that binds self and non-self lipid and glycolipid antigens and presents them to T-cell receptors on natural killer T-cells. In Cavia porcellus (Guinea pig), this protein is T-cell surface glycoprotein CD1c3 (CD1C3).